A 199-amino-acid polypeptide reads, in one-letter code: 3-isopropylmalate dehydratase small subunit (199 aa).

This sequence belongs to the LeuD family. LeuD type 1 subfamily. As to quaternary structure, heterodimer of LeuC and LeuD.

The enzyme catalyses (2R,3S)-3-isopropylmalate = (2S)-2-isopropylmalate. It participates in amino-acid biosynthesis; L-leucine biosynthesis; L-leucine from 3-methyl-2-oxobutanoate: step 2/4. In terms of biological role, catalyzes the isomerization between 2-isopropylmalate and 3-isopropylmalate, via the formation of 2-isopropylmaleate. The protein is 3-isopropylmalate dehydratase small subunit of Bacillus licheniformis (strain ATCC 14580 / DSM 13 / JCM 2505 / CCUG 7422 / NBRC 12200 / NCIMB 9375 / NCTC 10341 / NRRL NRS-1264 / Gibson 46).